Here is a 276-residue protein sequence, read N- to C-terminus: Diaminopimelate epimerase (276 aa).

Residues N13, Q46, and N66 each coordinate substrate. Catalysis depends on C75, which acts as the Proton donor. Substrate is bound by residues 76–77 (GN), N159, N192, and 210–211 (ER). C219 functions as the Proton acceptor in the catalytic mechanism. 220–221 (GT) contacts substrate.

It belongs to the diaminopimelate epimerase family. As to quaternary structure, homodimer.

It localises to the cytoplasm. The catalysed reaction is (2S,6S)-2,6-diaminopimelate = meso-2,6-diaminopimelate. The protein operates within amino-acid biosynthesis; L-lysine biosynthesis via DAP pathway; DL-2,6-diaminopimelate from LL-2,6-diaminopimelate: step 1/1. In terms of biological role, catalyzes the stereoinversion of LL-2,6-diaminopimelate (L,L-DAP) to meso-diaminopimelate (meso-DAP), a precursor of L-lysine and an essential component of the bacterial peptidoglycan. The polypeptide is Diaminopimelate epimerase (Hahella chejuensis (strain KCTC 2396)).